The chain runs to 219 residues: 7-cyano-7-deazaguanine synthase (219 aa).

Residue Phe-10 to Leu-20 coordinates ATP. 4 residues coordinate Zn(2+): Cys-188, Cys-197, Cys-200, and Cys-203.

The protein belongs to the QueC family. Homodimer. Zn(2+) serves as cofactor.

The catalysed reaction is 7-carboxy-7-deazaguanine + NH4(+) + ATP = 7-cyano-7-deazaguanine + ADP + phosphate + H2O + H(+). The protein operates within purine metabolism; 7-cyano-7-deazaguanine biosynthesis. Its function is as follows. Catalyzes the ATP-dependent conversion of 7-carboxy-7-deazaguanine (CDG) to 7-cyano-7-deazaguanine (preQ(0)). The sequence is that of 7-cyano-7-deazaguanine synthase from Clostridium botulinum (strain ATCC 19397 / Type A).